The following is an 857-amino-acid chain: Envelope glycoprotein B (857 aa).

A signal peptide spans 1–21 (MTRRRVLSVVVLLAALACRLG). Residues 22–732 (AQTPEQPAPP…SGFISFFKNP (711 aa)) are Virion surface-facing. Disulfide bonds link Cys51/Cys528, Cys68/Cys484, Cys141/Cys206, Cys295/Cys342, and Cys551/Cys588. Residue Asn76 is glycosylated (N-linked (GlcNAc...) asparagine; by host). Residues 108 to 114 (IYNGWYA) are involved in fusion and/or binding to host membrane. An N-linked (GlcNAc...) asparagine; by host glycan is attached at Asn163. Residues 192–200 (GWLIWTYRT) are involved in fusion and/or binding to host membrane. Residues Asn290, Asn329, Asn348, and Asn395 are each glycosylated (N-linked (GlcNAc...) asparagine; by host). Residues 398-452 (ELTTPTSSPPSSPSPPAPPAARGSTSAAVLRRRRRDAGNATTPVPPAAPGKSLGT) are disordered. A compositionally biased stretch (pro residues) spans 404-416 (SSPPSSPSPPAPP). Asn436, Asn563, and Asn629 each carry an N-linked (GlcNAc...) asparagine; by host glycan. Hydrophobic membrane proximal region regions lie at residues 678 to 730 (LDNA…SFFK) and 709 to 729 (NLVS…ISFF). A helical membrane pass occupies residues 733-753 (FGGMLILVLVAGVVILVISLT). The Intravirion segment spans residues 754-857 (RRTRQMSQQP…ALLGEAETEF (104 aa)). Residues 832 to 857 (FPGLRRRRYHDPETAAALLGEAETEF) form a disordered region. Over residues 845 to 857 (TAAALLGEAETEF) the composition is skewed to low complexity.

The protein belongs to the herpesviridae glycoprotein B family. In terms of assembly, homotrimer; disulfide-linked. Binds to heparan sulfate proteoglycans. Interacts with gH/gL heterodimer. Post-translationally, a proteolytic cleavage by host furin generates two subunits that remain linked by disulfide bonds.

It is found in the virion membrane. The protein resides in the host cell membrane. It localises to the host endosome membrane. Its subcellular location is the host Golgi apparatus membrane. Functionally, envelope glycoprotein that forms spikes at the surface of virion envelope. Essential for the initial attachment to heparan sulfate moieties of the host cell surface proteoglycans. Involved in fusion of viral and cellular membranes leading to virus entry into the host cell. Following initial binding to its host receptors, membrane fusion is mediated by the fusion machinery composed at least of gB and the heterodimer gH/gL. May be involved in the fusion between the virion envelope and the outer nuclear membrane during virion egress. The chain is Envelope glycoprotein B from Epstein-Barr virus (strain GD1) (HHV-4).